A 98-amino-acid chain; its full sequence is Plastocyanin (98 aa).

The region spanning 1-98 is the Plastocyanin-like domain; it reads AQIVKLGGDD…AGMKMTITVQ (98 aa). Residues H38, C83, H86, and M91 each coordinate Cu(2+).

The protein belongs to the plastocyanin family. The cofactor is Cu(2+).

Its subcellular location is the plastid. The protein resides in the chloroplast thylakoid membrane. Participates in electron transfer between P700 and the cytochrome b6-f complex in photosystem I. Has antiviral activity against Potato virus Y (strain N). The protein is Plastocyanin (PETE) of Ulva pertusa (Sea lettuce).